The primary structure comprises 354 residues: UDP-N-acetylglucosamine--N-acetylmuramyl-(pentapeptide) pyrophosphoryl-undecaprenol N-acetylglucosamine transferase (354 aa).

UDP-N-acetyl-alpha-D-glucosamine contacts are provided by residues 15–17 (TGG), Asn127, Arg163, Ser191, Ile244, 263–268 (ALTVSE), and Gln288.

This sequence belongs to the glycosyltransferase 28 family. MurG subfamily.

Its subcellular location is the cell inner membrane. It catalyses the reaction di-trans,octa-cis-undecaprenyl diphospho-N-acetyl-alpha-D-muramoyl-L-alanyl-D-glutamyl-meso-2,6-diaminopimeloyl-D-alanyl-D-alanine + UDP-N-acetyl-alpha-D-glucosamine = di-trans,octa-cis-undecaprenyl diphospho-[N-acetyl-alpha-D-glucosaminyl-(1-&gt;4)]-N-acetyl-alpha-D-muramoyl-L-alanyl-D-glutamyl-meso-2,6-diaminopimeloyl-D-alanyl-D-alanine + UDP + H(+). It participates in cell wall biogenesis; peptidoglycan biosynthesis. Functionally, cell wall formation. Catalyzes the transfer of a GlcNAc subunit on undecaprenyl-pyrophosphoryl-MurNAc-pentapeptide (lipid intermediate I) to form undecaprenyl-pyrophosphoryl-MurNAc-(pentapeptide)GlcNAc (lipid intermediate II). The polypeptide is UDP-N-acetylglucosamine--N-acetylmuramyl-(pentapeptide) pyrophosphoryl-undecaprenol N-acetylglucosamine transferase (Aliivibrio fischeri (strain ATCC 700601 / ES114) (Vibrio fischeri)).